A 461-amino-acid polypeptide reads, in one-letter code: Argininosuccinate lyase (461 aa).

It belongs to the lyase 1 family. Argininosuccinate lyase subfamily.

The protein resides in the cytoplasm. The enzyme catalyses 2-(N(omega)-L-arginino)succinate = fumarate + L-arginine. It participates in amino-acid biosynthesis; L-arginine biosynthesis; L-arginine from L-ornithine and carbamoyl phosphate: step 3/3. The protein is Argininosuccinate lyase of Symbiobacterium thermophilum (strain DSM 24528 / JCM 14929 / IAM 14863 / T).